A 1399-amino-acid chain; its full sequence is DNA-directed RNA polymerase subunit beta' (1399 aa).

4 residues coordinate Zn(2+): C71, C73, C86, and C89. Residues D462, D464, and D466 each coordinate Mg(2+). Residues C810, C884, C891, and C894 each contribute to the Zn(2+) site.

The protein belongs to the RNA polymerase beta' chain family. As to quaternary structure, the RNAP catalytic core consists of 2 alpha, 1 beta, 1 beta' and 1 omega subunit. When a sigma factor is associated with the core the holoenzyme is formed, which can initiate transcription. Requires Mg(2+) as cofactor. The cofactor is Zn(2+).

The enzyme catalyses RNA(n) + a ribonucleoside 5'-triphosphate = RNA(n+1) + diphosphate. DNA-dependent RNA polymerase catalyzes the transcription of DNA into RNA using the four ribonucleoside triphosphates as substrates. The protein is DNA-directed RNA polymerase subunit beta' of Nitrobacter winogradskyi (strain ATCC 25391 / DSM 10237 / CIP 104748 / NCIMB 11846 / Nb-255).